The following is a 365-amino-acid chain: Phospho-N-acetylmuramoyl-pentapeptide-transferase (365 aa).

A run of 10 helical transmembrane segments spans residues 22-42 (YISV…LALG), 74-94 (TMGG…WGDL), 95-115 (TSIY…IGFF), 134-154 (KFAL…YLLS), 168-188 (SLYI…IING), 201-221 (GLAI…AYIE), 240-260 (LAEV…FLWF), 267-287 (VFMG…IAVM), 292-312 (LIFF…MLQV), and 342-362 (KVVI…LAAI).

It belongs to the glycosyltransferase 4 family. MraY subfamily. Requires Mg(2+) as cofactor.

It localises to the cell inner membrane. The catalysed reaction is UDP-N-acetyl-alpha-D-muramoyl-L-alanyl-gamma-D-glutamyl-meso-2,6-diaminopimeloyl-D-alanyl-D-alanine + di-trans,octa-cis-undecaprenyl phosphate = di-trans,octa-cis-undecaprenyl diphospho-N-acetyl-alpha-D-muramoyl-L-alanyl-D-glutamyl-meso-2,6-diaminopimeloyl-D-alanyl-D-alanine + UMP. Its pathway is cell wall biogenesis; peptidoglycan biosynthesis. In terms of biological role, catalyzes the initial step of the lipid cycle reactions in the biosynthesis of the cell wall peptidoglycan: transfers peptidoglycan precursor phospho-MurNAc-pentapeptide from UDP-MurNAc-pentapeptide onto the lipid carrier undecaprenyl phosphate, yielding undecaprenyl-pyrophosphoryl-MurNAc-pentapeptide, known as lipid I. The polypeptide is Phospho-N-acetylmuramoyl-pentapeptide-transferase (Francisella tularensis subsp. mediasiatica (strain FSC147)).